We begin with the raw amino-acid sequence, 299 residues long: ATP phosphoribosyltransferase (299 aa).

It belongs to the ATP phosphoribosyltransferase family. Long subfamily. In terms of assembly, equilibrium between an active dimeric form, an inactive hexameric form and higher aggregates. Interconversion between the various forms is largely reversible and is influenced by the natural substrates and inhibitors of the enzyme. Mg(2+) is required as a cofactor.

It localises to the cytoplasm. The catalysed reaction is 1-(5-phospho-beta-D-ribosyl)-ATP + diphosphate = 5-phospho-alpha-D-ribose 1-diphosphate + ATP. Its pathway is amino-acid biosynthesis; L-histidine biosynthesis; L-histidine from 5-phospho-alpha-D-ribose 1-diphosphate: step 1/9. Feedback inhibited by histidine. Catalyzes the condensation of ATP and 5-phosphoribose 1-diphosphate to form N'-(5'-phosphoribosyl)-ATP (PR-ATP). Has a crucial role in the pathway because the rate of histidine biosynthesis seems to be controlled primarily by regulation of HisG enzymatic activity. The sequence is that of ATP phosphoribosyltransferase from Enterobacter sp. (strain 638).